We begin with the raw amino-acid sequence, 116 residues long: Large ribosomal subunit protein bL17 (116 aa).

It belongs to the bacterial ribosomal protein bL17 family. As to quaternary structure, part of the 50S ribosomal subunit. Contacts protein L32.

The protein is Large ribosomal subunit protein bL17 of Synechococcus sp. (strain RCC307).